A 113-amino-acid polypeptide reads, in one-letter code: MSLLPVMVIFGLSFPPVLFEMILSLALFFALRRFLLPSGIYDFVWHPALFNTALYCCVFYLISCHSGADCRYRYFPCLVLLYRIALDAGRQIHRRCGGHCAGRQRPAQRRAYS.

2 consecutive transmembrane segments (helical) span residues 3–23 (LLPVMVIFGLSFPPVLFEMIL) and 43–63 (FVWHPALFNTALYCCVFYLIS).

This sequence belongs to the AaeX family.

It is found in the cell membrane. The polypeptide is Protein AaeX (Sodalis glossinidius (strain morsitans)).